The sequence spans 575 residues: Acetolactate synthase large subunit (575 aa).

A thiamine diphosphate-binding site is contributed by Glu57. FAD-binding positions include Arg159, 265–286, and 308–327; these read HGSY…LGSR and DIDA…ILSD. The segment at 395-475 is thiamine pyrophosphate binding; the sequence is QHQMWVAQYY…IKVVLINNHS (81 aa). Mg(2+) contacts are provided by Asp446 and Asn473.

This sequence belongs to the TPP enzyme family. In terms of assembly, dimer of large and small chains. Requires Mg(2+) as cofactor. Thiamine diphosphate serves as cofactor.

The catalysed reaction is 2 pyruvate + H(+) = (2S)-2-acetolactate + CO2. The protein operates within amino-acid biosynthesis; L-isoleucine biosynthesis; L-isoleucine from 2-oxobutanoate: step 1/4. Its pathway is amino-acid biosynthesis; L-valine biosynthesis; L-valine from pyruvate: step 1/4. The polypeptide is Acetolactate synthase large subunit (ilvB) (Lactococcus lactis subsp. lactis (strain IL1403) (Streptococcus lactis)).